A 354-amino-acid polypeptide reads, in one-letter code: Uroporphyrinogen decarboxylase (354 aa).

Residues 27 to 31 (RQAGR), D77, Y154, T209, and H327 each bind substrate.

Belongs to the uroporphyrinogen decarboxylase family. Homodimer.

The protein localises to the cytoplasm. The enzyme catalyses uroporphyrinogen III + 4 H(+) = coproporphyrinogen III + 4 CO2. It participates in porphyrin-containing compound metabolism; protoporphyrin-IX biosynthesis; coproporphyrinogen-III from 5-aminolevulinate: step 4/4. Functionally, catalyzes the decarboxylation of four acetate groups of uroporphyrinogen-III to yield coproporphyrinogen-III. This chain is Uroporphyrinogen decarboxylase, found in Escherichia coli O81 (strain ED1a).